A 178-amino-acid chain; its full sequence is Mediator of RNA polymerase II transcription subunit 28 (178 aa).

The tract at residues 1-44 (MAAPLGGMFSGQPPGPPQAPPGLPGQASLLQAAPGAPRPSSSTL) is disordered. The span at 13–23 (PPGPPQAPPGL) shows a compositional bias: pro residues. Residues 109 to 145 (QVIKEDVSELRNELQRKDALVQKHLTKLRHWQQVLED) adopt a coiled-coil conformation.

Belongs to the Mediator complex subunit 28 family. In terms of assembly, component of the Mediator complex, which is composed of MED1, MED4, MED6, MED7, MED8, MED9, MED10, MED11, MED12, MED13, MED13L, MED14, MED15, MED16, MED17, MED18, MED19, MED20, MED21, MED22, MED23, MED24, MED25, MED26, MED27, MED29, MED30, MED31, CCNC, CDK8 and CDC2L6/CDK11. The MED12, MED13, CCNC and CDK8 subunits form a distinct module termed the CDK8 module. Mediator containing the CDK8 module is less active than Mediator lacking this module in supporting transcriptional activation. Individual preparations of the Mediator complex lacking one or more distinct subunits have been variously termed ARC, CRSP, DRIP, PC2, SMCC and TRAP. Forms a ternary complex with NF2/merlin and GRB2. Binds to actin. In terms of tissue distribution, widely expressed. Highly expressed in vascular tissues such as placenta, testis and liver.

It localises to the nucleus. The protein localises to the cytoplasm. Its subcellular location is the membrane. In terms of biological role, component of the Mediator complex, a coactivator involved in the regulated transcription of nearly all RNA polymerase II-dependent genes. Mediator functions as a bridge to convey information from gene-specific regulatory proteins to the basal RNA polymerase II transcription machinery. Mediator is recruited to promoters by direct interactions with regulatory proteins and serves as a scaffold for the assembly of a functional preinitiation complex with RNA polymerase II and the general transcription factors. May be part of a complex containing NF2/merlin that participates in cellular signaling to the actin cytoskeleton downstream of tyrosine kinase signaling pathways. The protein is Mediator of RNA polymerase II transcription subunit 28 (MED28) of Homo sapiens (Human).